Reading from the N-terminus, the 1167-residue chain is MDIIDNVDITLPENGEDIVIVGGRRYDYNGDLAKFKAFKVAKHIWVVPGRYYGEKLDIQDGEKINGGIYDKDFLSQNQEKQEFMDGVILLLKRINNTLEGKRLLSLITSAVPFPNEDDGIYKQNNFILSDKTFKAYTSNIIIFGPGANLVENKVIAFNSGDAENGLGTISEICFQPLLTYKFGDYFQDPALDLLKCLIKSLYYLYGIKVPEDFTLPYRLTNNPDKTEYSQVNMEDLLISGGDDLNAAGQRPYWLWNNYFIDAKDKFDKYKEIYENQMKLDPNLEINLSNHLEQKFNINISELWSLNISNFARTFNLKSPRSFYKALKYYYRKKYYKIHYNEIFGTNYNIYGFIDGQVNASLKETDLNIINKPQQIINLIDNNNILLIKSYIYDDELNKIDYNFYNNYEIPYNYGNSFKIPNITGILLPSVNYELIDKIPKIAEIKPYIKDSTPLPDSEKTPIPKELNVGIPLPIHYLDSQIYKGDEDKDFILSPDFLKVVSTKDKSLVYSFLPNIVSYFDGYDKTKISTDKKYYLWIREVLNNYSIDITRTENIIGIFGVDEIVPWMGRALNILNTENTFETELRKNGLKALLSKDLNVIFPKTKVDPIPTDNPPLTIEKIDEKLSDIYIKNKFFLIKNYYITIQQWWICCYSQFLNLSYMCREAIINQQNLIEKIILNQLSYLARETSINIETLYILSVTTEKTIEDLREISQKSMNNICNFFERASVSIFHTDIYNKFIDHMKYIVDDANTKIINYINSNSNITQEEKNYLINKYMLTEEDFNFFNFDKLINLFNSKIQLTIKNEKPEYNLLLSINQNESNENITDISGNNVKISYSNNINILDGRNEQAIYLDNDSQYVDFKSKNFENGVTNNFTISFWMRTLEKVDTNSTLLTSKLNENSAGWQLDLRRNGLVWSMKDHNKNEINIYLNDFLDISWHYIVVSVNRLTNILTVYIDGELSVNRNIEEIYNLYSDVGTIKLQASGSKVRIESFSILNRDIQRDEVSNRYINYIDNVNLRNIYGERLEYNKEYEVSNYVYPRNLLYKVNDIYLAIERGSNSSNRFKLILININEDKKFVQQKDIVIIKDVTQNKYLGISEDSNKIKLVDRNNALELILDNHLLNPNYTTFSTKQEEYLRLSNIDGIYNWVIKDVSRLNDIYSWTLI.

Residues 1-381 form a light chain nLC region; it reads MDIIDNVDIT…PQQIINLIDN (381 aa). Residues 382–804 are N-heavy chain nHN; the sequence is NNILLIKSYI…LFNSKIQLTI (423 aa). The C-heavy chain nHC stretch occupies residues 805 to 1167; that stretch reads KNEKPEYNLL…LNDIYSWTLI (363 aa).

It belongs to the botulism non-toxic nonhemagglutinin family.

Expression of the ptox operon (ntnh-orfX1-orfX2-orfX3-pmp1) in B.thuringiensis kills Anopheles but not Aedes mosquito 3rd instar larvae. The ntnh-pmp1 construct is about half as toxic. In Paraclostridium bifermentans (Clostridium bifermentans), this protein is Non-toxic nonhemagglutinin.